The chain runs to 185 residues: Ribosome-recycling factor (185 aa).

Belongs to the RRF family.

It localises to the cytoplasm. Responsible for the release of ribosomes from messenger RNA at the termination of protein biosynthesis. May increase the efficiency of translation by recycling ribosomes from one round of translation to another. This Helicobacter pylori (strain Shi470) protein is Ribosome-recycling factor.